A 450-amino-acid chain; its full sequence is Beclin-1 (450 aa).

Methionine 1 carries the N-acetylmethionine modification. Phosphoserine occurs at positions 15 and 30. Residues 48-72 (TTAQAKPGETQEEETNSGEEPFIET) are disordered. Phosphoserine; by AMPK is present on residues serine 90, serine 93, and serine 96. The BH3 motif lies at 108–127 (TMENLSRRLKVTGDLFDIMS). Positions 112-159 (LSRRLKVTGDLFDIMSGQTDVDHPLCEECTDTLLDQLDTQLNVTENEC) are interaction with BCL2 and BCL2L1 isoform Bcl-X(L). Phosphothreonine; by DAPK1 is present on threonine 119. Residues 142-270 (DTLLDQLDTQ…LDKLKKTNVF (129 aa)) adopt a coiled-coil conformation. Positions 245-450 (DELKSVENQM…AWVSSQFYNK (206 aa)) are evolutionary conserved domain (ECD). Residues lysine 402 and lysine 437 each participate in a glycyl lysine isopeptide (Lys-Gly) (interchain with G-Cter in ubiquitin) cross-link. The segment at 425 to 450 (WTKALKFMLTNLKWGLAWVSSQFYNK) is required for membrane-association.

Belongs to the beclin family. In terms of assembly, a homodimeric form is proposed to exist; this metastable form readily transits to ATG14- or UVRAG-containing complexes with BECN1:UVRAG being more stable than BECN1:ATG14. Component of the PI3K (PI3KC3/PI3K-III/class III phosphatidylinositol 3-kinase) complex the core of which is composed of the catalytic subunit PIK3C3, the regulatory subunit PIK3R4 and BECN1 associating with additional regulatory/auxiliary subunits to form alternative complex forms. Alternative complex forms containing a fourth regulatory subunit in a mutually exclusive manner are PI3K complex I (PI3KC3-C1) containing ATG14, and PI3K complex II (PI3KC3-C2) containing UVRAG. PI3KC3-C1 displays a V-shaped architecture with PIK3R4 serving as a bridge between PIK3C3 and the ATG14:BECN1 subcomplex. Both, PI3KC3-C1 and PI3KC3-C2, can associate with further regulatory subunits, such as RUBCN, SH3GLB1/Bif-1 and AMBRA1. PI3KC3-C1 probably associates with PIK3CB. Forms a complex with PPP2CA and AMBRA1; AMBRA1 and BECN1 components of the complex regulate MYC stability via different pathways. Component of the complex, at least composed of LRPPRC, BECN1 and BCL2; the interactions prevent BECN1 from forming an autophagy-inducing complex with PIK3C3. Interacts with AMBRA1, GOPC, GRID2. Interacts with BCL2 and BCL2L1 isoform Bcl-X(L); the interaction inhibits BECN1 function in promoting autophagy by interfering with the formation of the PI3K complex. Interacts with cytosolic HMGB1; inhibits the interaction of BECN1 and BCL2 leading to promotion of autophagy. Interacts with USP10, USP13, VMP1, DAPK1, RAB39A. Interacts with the poly-Gln domain of ATXN3; the interaction causes deubiquitination at Lys-402 and stabilizes BECN1. Interacts with SLAMF1. Interacts with TRIM5; the interaction causes activation of BECN1 by causing its dissociation from its inhibitors BCL2 and TAB2. Interacts with active ULK1 (phosphorylated on 'Ser-317') and MEFV simultaneously. Interacts with WDR81 and WDR91; negatively regulates the PI3 kinase/PI3K activity associated with endosomal membranes. Interacts with LAPTM4B; competes with EGFR for LAPTM4B binding; regulates EGFR activity. Interacts with TRIM50. Interacts with TRIM16. Interacts with ATG14; this interaction is increased in the absence of TMEM39A. Interacts with WASHC1; preventing interaction with AMBRA1 and the DCX(AMBRA1) complex and subsequent ubiquitination. Interacts with TRIM17. Interacts with BCL2L10/BCL-B (via BH1 domain). Interacts with SH3BGRL. Interacts with IRGM; enhancing BECN1-interacting partners and influencing the composition of the BECN1 complex. Interacts with ARMC3. Interacts with LRPPRC. (Microbial infection) Interacts with human cytomegalovirus/HHV-5 protein TRS1. As to quaternary structure, (Microbial infection) Interacts with murine gammaherpesvirus 68 M11. In terms of assembly, (Microbial infection) Interacts with herpes simplex virus 1 (HHV-1) protein ICP34.5; this interaction antagonizes the host autophagy response. (Microbial infection) Interacts with Epstein-Barr virus protein BHRF1; this interaction inhibits BECN1-mediated autophagy induction. Phosphorylation at Thr-119 by DAPK1 reduces its interaction with BCL2 and BCL2L1 and promotes induction of autophagy. In response to autophagic stimuli, phosphorylated at serine residues by AMPK in an ATG14-dependent manner, and this phosphorylation is critical for maximally efficient autophagy. Post-translationally, polyubiquitinated by NEDD4, both with 'Lys-11'- and 'Lys-63'-linkages. 'Lys-11'-linked polyubiquitination leads to degradation and is enhanced when the stabilizing interaction partner VPS34 is depleted. Deubiquitinated by USP10 and USP13, leading to stabilize the PIK3C3/VPS34-containing complexes. Polyubiquitinated at Lys-402 with 'Lys-48'-linkages. 'Lys-48'-linked polyubiquitination of Lys-402 leads to degradation. Deubiquitinated by ATXN3, leading to stabilization. Ubiquitinated at Lys-437 via 'Lys-63'-linkage by the DCX(AMBRA1) complex, thereby increasing the association between BECN1 and PIK3C3 to promote PIK3C3 activity. 'Lys-48'-linked ubiquitination by RNF216 leads to proteasomal degradation and autophagy inhibition. In terms of processing, proteolytically processed by caspases including CASP8 and CASP3; the C-terminal fragments lack autophagy-inducing capacity and are proposed to induce apoptosis. Thus the cleavage is proposed to be an determinant to switch from autophagy to apoptosis pathways affecting cellular homeostasis including viral infections and survival of tumor cells. Ubiquitous.

It localises to the cytoplasm. Its subcellular location is the golgi apparatus. The protein localises to the trans-Golgi network membrane. It is found in the endosome membrane. The protein resides in the endoplasmic reticulum membrane. It localises to the mitochondrion membrane. Its subcellular location is the endosome. The protein localises to the cytoplasmic vesicle. It is found in the autophagosome. The protein resides in the mitochondrion. It localises to the nucleus. Functionally, plays a central role in autophagy. Acts as a core subunit of the PI3K complex that mediates formation of phosphatidylinositol 3-phosphate; different complex forms are believed to play a role in multiple membrane trafficking pathways: PI3KC3-C1 is involved in initiation of autophagosomes and PI3KC3-C2 in maturation of autophagosomes and endocytosis. Involved in regulation of degradative endocytic trafficking and required for the abscission step in cytokinesis, probably in the context of PI3KC3-C2. Essential for the formation of PI3KC3-C2 but not PI3KC3-C1 PI3K complex forms. Involved in endocytosis. May play a role in antiviral host defense. In terms of biological role, beclin-1-C 35 kDa localized to mitochondria can promote apoptosis; it induces the mitochondrial translocation of BAX and the release of proapoptotic factors. (Microbial infection) Protects against infection by a neurovirulent strain of Sindbis virus. The protein is Beclin-1 (BECN1) of Homo sapiens (Human).